Consider the following 44-residue polypeptide: Thymosin beta-4, Y-chromosomal (44 aa).

The interval 1–44 is disordered; it reads MSDKPGMAEIEKFDKSKLKKTETQEKNPLSSKETIEQERQAGES. Composition is skewed to basic and acidic residues over residues 9 to 25 and 33 to 44; these read EIEK…ETQE and ETIEQERQAGES.

Belongs to the thymosin beta family. In terms of tissue distribution, ubiquitous.

The protein localises to the cytoplasm. The protein resides in the cytoskeleton. Its function is as follows. Plays an important role in the organization of the cytoskeleton. Binds to and sequesters actin monomers (G actin) and therefore inhibits actin polymerization. This is Thymosin beta-4, Y-chromosomal (TMSB4Y) from Homo sapiens (Human).